Reading from the N-terminus, the 198-residue chain is Chromophore lyase CpcS/CpeS 2 (198 aa).

Belongs to the CpcS/CpeS biliprotein lyase family.

The protein localises to the plastid. It localises to the organellar chromatophore. Functionally, covalently attaches a chromophore to Cys residue(s) of phycobiliproteins. This Paulinella chromatophora protein is Chromophore lyase CpcS/CpeS 2.